Here is a 971-residue protein sequence, read N- to C-terminus: Polyamine-modulated factor 1-binding protein 1 (971 aa).

6 coiled-coil regions span residues 37–69 (NKQY…LQAS), 117–229 (EKLH…ACSN), 282–325 (LHVE…LREE), 355–680 (QKLS…SAIQ), 706–827 (QDDL…DEKE), and 879–916 (IAKL…KAGT).

Expressed in testis and more specifically in ODF, the sperm tail specific cytoskeletal structure. Also expressed in epididymides and brain.

It is found in the cell projection. The protein resides in the cilium. It localises to the flagellum. Its function is as follows. Required for normal spermatogenesis. It functions as a scaffold protein that attaches the sperm head-tail connecting piece to the nuclear envelope, thus maintaining sperm head and tail integrity. May also be involved in the general organization of cellular cytoskeleton. The sequence is that of Polyamine-modulated factor 1-binding protein 1 (Pmfbp1) from Rattus norvegicus (Rat).